Reading from the N-terminus, the 199-residue chain is FMN-dependent NADH:quinone oxidoreductase 4 (199 aa).

Residues serine 10, methionine 95 to leucine 98, and serine 139 to glycine 142 contribute to the FMN site.

This sequence belongs to the azoreductase type 1 family. Homodimer. FMN serves as cofactor.

It catalyses the reaction 2 a quinone + NADH + H(+) = 2 a 1,4-benzosemiquinone + NAD(+). The catalysed reaction is N,N-dimethyl-1,4-phenylenediamine + anthranilate + 2 NAD(+) = 2-(4-dimethylaminophenyl)diazenylbenzoate + 2 NADH + 2 H(+). Its function is as follows. Quinone reductase that provides resistance to thiol-specific stress caused by electrophilic quinones. In terms of biological role, also exhibits azoreductase activity. Catalyzes the reductive cleavage of the azo bond in aromatic azo compounds to the corresponding amines. The chain is FMN-dependent NADH:quinone oxidoreductase 4 from Burkholderia lata (strain ATCC 17760 / DSM 23089 / LMG 22485 / NCIMB 9086 / R18194 / 383).